We begin with the raw amino-acid sequence, 173 residues long: uncharacterized protein (173 aa).

The tract at residues Pro49–Asn72 is disordered.

This is an uncharacterized protein from Human adenovirus B serotype 7 (HAdV-7).